The primary structure comprises 318 residues: tRNA dimethylallyltransferase (318 aa).

13–20 contributes to the ATP binding site; it reads GPTAVGKT. 15–20 contributes to the substrate binding site; it reads TAVGKT. The interaction with substrate tRNA stretch occupies residues 38 to 41; sequence DSMQ.

Belongs to the IPP transferase family. In terms of assembly, monomer. Requires Mg(2+) as cofactor.

The enzyme catalyses adenosine(37) in tRNA + dimethylallyl diphosphate = N(6)-dimethylallyladenosine(37) in tRNA + diphosphate. Its function is as follows. Catalyzes the transfer of a dimethylallyl group onto the adenine at position 37 in tRNAs that read codons beginning with uridine, leading to the formation of N6-(dimethylallyl)adenosine (i(6)A). This is tRNA dimethylallyltransferase from Bacillus pumilus (strain SAFR-032).